Consider the following 275-residue polypeptide: Homeobox protein Hox-C12a (275 aa).

Disordered stretches follow at residues 101 to 129 (SREN…DHGM) and 148 to 213 (QLTQ…KRKP). The span at 155 to 177 (SCQSMESDSSSSLLNEASKPSSS) shows a compositional bias: low complexity. The span at 178–194 (DTQTLVSPGSHTGTITA) shows a compositional bias: polar residues. The homeobox DNA-binding region spans 207-266 (TRKKRKPYSKLQLAELEGEFMMNEFITRQRRRELSDRLNLSDQQVKIWFQNRRMKKKRLM).

This sequence belongs to the Abd-B homeobox family.

It localises to the nucleus. Sequence-specific transcription factor which is part of a developmental regulatory system that provides cells with specific positional identities on the anterior-posterior axis. In Takifugu rubripes (Japanese pufferfish), this protein is Homeobox protein Hox-C12a (hoxc12a).